The chain runs to 484 residues: Probable glycine dehydrogenase (decarboxylating) subunit 2 (484 aa).

Position 264 is an N6-(pyridoxal phosphate)lysine (lysine 264).

Belongs to the GcvP family. C-terminal subunit subfamily. The glycine cleavage system is composed of four proteins: P, T, L and H. In this organism, the P 'protein' is a heterodimer of two subunits. It depends on pyridoxal 5'-phosphate as a cofactor.

It catalyses the reaction N(6)-[(R)-lipoyl]-L-lysyl-[glycine-cleavage complex H protein] + glycine + H(+) = N(6)-[(R)-S(8)-aminomethyldihydrolipoyl]-L-lysyl-[glycine-cleavage complex H protein] + CO2. The glycine cleavage system catalyzes the degradation of glycine. The P protein binds the alpha-amino group of glycine through its pyridoxal phosphate cofactor; CO(2) is released and the remaining methylamine moiety is then transferred to the lipoamide cofactor of the H protein. This chain is Probable glycine dehydrogenase (decarboxylating) subunit 2, found in Legionella pneumophila subsp. pneumophila (strain Philadelphia 1 / ATCC 33152 / DSM 7513).